Here is a 580-residue protein sequence, read N- to C-terminus: Formate--tetrahydrofolate ligase (580 aa).

65-72 (TPHGEGKT) is a binding site for ATP.

The protein belongs to the formate--tetrahydrofolate ligase family.

It carries out the reaction (6S)-5,6,7,8-tetrahydrofolate + formate + ATP = (6R)-10-formyltetrahydrofolate + ADP + phosphate. The protein operates within one-carbon metabolism; tetrahydrofolate interconversion. This chain is Formate--tetrahydrofolate ligase, found in Shewanella baltica (strain OS223).